The primary structure comprises 464 residues: MSLHFLYYCSEPTLDVKIAFCQGFDKQVDVSYIAKHYNMSKSKVDNQFYSVEVGDSTFTVLKRYQNLKPIGSGAQGIVCAAYDAVLDRNVAIKKLSRPFQNQTHAKRAYRELVLMKCVNHKNIISLLNVFTPQKTLEEFQDVYLVMELMDANLCQVIQMELDHERMSYLLYQMLCGIKHLHSAGIIHRDLKPSNIVVKSDCTLKILDFGLARTAGTSFMMTPYVVTRYYRAPEVILGMGYKENVDIWSVGCIMGEMVRHKILFPGRDYIDQWNKVIEQLGTPCPEFMKKLQPTVRNYVENRPKYAGLTFPKLFPDSLFPADSEHNKLKASQARDLLSKMLVIDPAKRISVDDALQHPYINVWYDPAEVEAPPPQIYDKQLDEREHTIEEWKELIYKEVMNSEEKTKNGVVKGQPSPSGAAVNSSESLPPSSSVNDISSMSTDQTLASDTDSSLEASAGPLGCCR.

One can recognise a Protein kinase domain in the interval 64–359 (YQNLKPIGSG…VDDALQHPYI (296 aa)). Residues 70–78 (IGSGAQGIV) and K93 contribute to the ATP site. The active-site Proton acceptor is the D189. T221 carries the phosphothreonine; by MAP2K7 modification. The TXY signature appears at 221–223 (TPY). Y223 bears the Phosphotyrosine; by MAP2K4 mark. The disordered stretch occupies residues 405–464 (TKNGVVKGQPSPSGAAVNSSESLPPSSSVNDISSMSTDQTLASDTDSSLEASAGPLGCCR). A compositionally biased stretch (low complexity) spans 423-432 (SSESLPPSSS). The span at 433–454 (VNDISSMSTDQTLASDTDSSLE) shows a compositional bias: polar residues. S-palmitoyl cysteine attachment occurs at residues C462 and C463.

It belongs to the protein kinase superfamily. CMGC Ser/Thr protein kinase family. MAP kinase subfamily. Interacts with MAPKBP1. Interacts with MAPK8IP1/JIP-1 and MAPK8IP3/JIP-3/JSAP1. Interacts with SPAG9/MAPK8IP4/JIP4. Interacts with HDAC9. Interacts with ARRB2; the interaction enhances MAPK10 activation by MAP3K5. Interacts with SARM1. Interacts with JUND; interaction is inhibited in the presence of MEN1. The cofactor is Mg(2+). Dually phosphorylated on Thr-221 and Tyr-223 by MAP2K4 and MAP2K7, which activates the enzyme. MAP2K7 shows a strong preference for Thr-221 while MAP2K4 phosphorylates Tyr-223 preferentially. Weakly autophosphorylated on threonine and tyrosine residues in vitro. Post-translationally, palmitoylation regulates subcellular location and axonal development. Specific to a subset of neurons in the nervous system. Present in the hippocampus and areas, cerebellum, striatum, brain stem, and weakly in the spinal cord. Very weak expression in testis and kidney.

Its subcellular location is the cytoplasm. It is found in the membrane. The protein localises to the nucleus. The protein resides in the mitochondrion. It carries out the reaction L-seryl-[protein] + ATP = O-phospho-L-seryl-[protein] + ADP + H(+). The catalysed reaction is L-threonyl-[protein] + ATP = O-phospho-L-threonyl-[protein] + ADP + H(+). Its activity is regulated as follows. Activated by threonine and tyrosine phosphorylation by two dual specificity kinases, MAP2K4 and MAP2K7. MAP2K7 phosphorylates MAPK10 on Thr-221 causing a conformational change and a large increase in Vmax. MAP2K4 then phosphorylates Tyr-223 resulting in a further increase in Vmax. Inhibited by dual specificity phosphatases, such as DUSP1. Inhibited by HDAC9. In terms of biological role, serine/threonine-protein kinase involved in various processes such as neuronal proliferation, differentiation, migration and programmed cell death. Extracellular stimuli such as pro-inflammatory cytokines or physical stress stimulate the stress-activated protein kinase/c-Jun N-terminal kinase (SAP/JNK) signaling pathway. In this cascade, two dual specificity kinases MAP2K4/MKK4 and MAP2K7/MKK7 phosphorylate and activate MAPK10/JNK3. In turn, MAPK10/JNK3 phosphorylates a number of transcription factors, primarily components of AP-1 such as JUN and ATF2 and thus regulates AP-1 transcriptional activity. Plays regulatory roles in the signaling pathways during neuronal apoptosis. Phosphorylates the neuronal microtubule regulator STMN2. Acts in the regulation of the amyloid-beta precursor protein/APP signaling during neuronal differentiation by phosphorylating APP. Also participates in neurite growth in spiral ganglion neurons. Phosphorylates the CLOCK-BMAL1 heterodimer and plays a role in the photic regulation of the circadian clock. Phosphorylates JUND and this phosphorylation is inhibited in the presence of MEN1. This is Mitogen-activated protein kinase 10 (MAPK10) from Homo sapiens (Human).